Reading from the N-terminus, the 276-residue chain is Probable endonuclease 4 (276 aa).

His70, His108, Glu143, Asp176, His179, His210, Asp223, His225, and Glu255 together coordinate Zn(2+).

This sequence belongs to the AP endonuclease 2 family. The cofactor is Zn(2+).

It catalyses the reaction Endonucleolytic cleavage to 5'-phosphooligonucleotide end-products.. Endonuclease IV plays a role in DNA repair. It cleaves phosphodiester bonds at apurinic or apyrimidinic (AP) sites, generating a 3'-hydroxyl group and a 5'-terminal sugar phosphate. The chain is Probable endonuclease 4 from Mesomycoplasma hyopneumoniae (strain J / ATCC 25934 / NCTC 10110) (Mycoplasma hyopneumoniae).